The chain runs to 465 residues: UDP-N-acetylmuramate--L-alanine ligase (465 aa).

115–121 contacts ATP; sequence GAHGKTT.

It belongs to the MurCDEF family.

The protein localises to the cytoplasm. It carries out the reaction UDP-N-acetyl-alpha-D-muramate + L-alanine + ATP = UDP-N-acetyl-alpha-D-muramoyl-L-alanine + ADP + phosphate + H(+). It functions in the pathway cell wall biogenesis; peptidoglycan biosynthesis. Cell wall formation. This Coxiella burnetii (strain CbuK_Q154) (Coxiella burnetii (strain Q154)) protein is UDP-N-acetylmuramate--L-alanine ligase.